A 334-amino-acid chain; its full sequence is Ornithine carbamoyltransferase (334 aa).

Carbamoyl phosphate-binding positions include 56–59, glutamine 83, arginine 107, and 134–137; these read STRT and HPTQ. L-ornithine is bound by residues asparagine 168, aspartate 232, and 236-237; that span reads SM. Residues 274-275 and arginine 320 contribute to the carbamoyl phosphate site; that span reads CL.

This sequence belongs to the aspartate/ornithine carbamoyltransferase superfamily. OTCase family.

The protein resides in the cytoplasm. The enzyme catalyses carbamoyl phosphate + L-ornithine = L-citrulline + phosphate + H(+). It functions in the pathway amino-acid biosynthesis; L-arginine biosynthesis; L-arginine from L-ornithine and carbamoyl phosphate: step 1/3. Its function is as follows. Reversibly catalyzes the transfer of the carbamoyl group from carbamoyl phosphate (CP) to the N(epsilon) atom of ornithine (ORN) to produce L-citrulline. The protein is Ornithine carbamoyltransferase of Shigella boydii serotype 4 (strain Sb227).